Here is a 64-residue protein sequence, read N- to C-terminus: Conotoxin Cal6.24 (64 aa).

The N-terminal stretch at 1 to 22 (MKLTCVMIVAVLVLTVCKVVTS) is a signal peptide. 3 cysteine pairs are disulfide-bonded: Cys32–Cys50, Cys40–Cys54, and Cys49–Cys60.

Expressed by the venom duct.

The protein resides in the secreted. Its function is as follows. Probable neurotoxin. The sequence is that of Conotoxin Cal6.24 from Californiconus californicus (California cone).